Here is a 723-residue protein sequence, read N- to C-terminus: Solute carrier organic anion transporter family member 4A1 (723 aa).

Over 1–102 (MPQHAMGDTH…KCLQVFNTPK (102 aa)) the chain is Cytoplasmic. Residues 23–64 (SSATDSGCDTPPSSRASPASLRSAHGTLGSSSQPLFEPQAEK) are disordered. Over residues 33–46 (PPSSRASPASLRSA) the composition is skewed to low complexity. Phosphoserine occurs at positions 39, 42, and 45. Residues 103–123 (GFLFFLCAASFLQGMTVNGFI) traverse the membrane as a helical segment. Topologically, residues 124 to 142 (NTVITSIERRFDLHSYQSG) are extracellular. Residues 143–163 (LIASSYDIAACLCLTFVSYFG) traverse the membrane as a helical segment. Over 164–169 (GNGHKP) the chain is Cytoplasmic. The chain crosses the membrane as a helical span at residues 170-194 (RWLGWGVLVLGIGSLVFALPHFTAG). Topologically, residues 195–224 (RYEVEMDEGLGTGTCLTNQSHVECKDSASG) are extracellular. Asn212 carries N-linked (GlcNAc...) asparagine glycosylation. The chain crosses the membrane as a helical span at residues 225 to 255 (LSNYRLIFMLGQLLHGVGATPLYTLGVTYLD). At 256-274 (ENVKSSYSPIYIAIFYTAA) the chain is on the cytoplasmic side. The chain crosses the membrane as a helical span at residues 275–295 (ILGPAAGYLIGGAMLNVYTEV). Residues 296–309 (GQRTELTTDSPLWV) are Extracellular-facing. Residues 310 to 334 (GAWWIGFLGTGIAAFLIAIPILGYP) form a helical membrane-spanning segment. At 335–380 (RQLPGSQRYVVMRAAETQQLKDHSRGAVSNPAFGKTVRDLPLSIWL) the chain is on the cytoplasmic side. The helical transmembrane segment at 381–402 (LLRNPTFILLCLAGATEATLIA) threads the bilayer. Over 403-422 (GMSTFGPKFFEAQFSLSASE) the chain is Extracellular. The helical transmembrane segment at 423–446 (AATLFGYLVVPAGGGGTLLGGFLV) threads the bilayer. Topologically, residues 447–450 (NKFK) are cytoplasmic. A helical membrane pass occupies residues 451–473 (LRGSGIIRFCLFCTLTSLLAFFV). Topologically, residues 474 to 582 (FLMHCPNVHM…ASTCQSKPFL (109 aa)) are extracellular. The 58-residue stretch at 500-557 (LDLKAACNAIYCCQPKHYSPLCGSDGTMYYSPCYAGCPADAETDLGGQKVYRGCSCIL) folds into the Kazal-like domain. Disulfide bonds link Cys506-Cys536 and Cys521-Cys555. N-linked (GlcNAc...) asparagine glycosylation is present at Asn566. The chain crosses the membrane as a helical span at residues 583–605 (LVLVFVVIIFTFLSSIPALTATL). Over 606–614 (RCVSDRQRS) the chain is Cytoplasmic. Residues 615 to 640 (FALGIQWIVVRTLGSIPGPIAFGWVI) traverse the membrane as a helical segment. Residues 641-673 (DKACLLWQDQCGHQGSCFVYENEAMSRYMLIAG) are Extracellular-facing. A helical transmembrane segment spans residues 674–691 (LTFKVLGFLFFVAAYFLY). Residues 692–723 (KSPSVSSDGLEASLPSQSSASDSPTEQLQSNV) are Cytoplasmic-facing. Residues 700–723 (GLEASLPSQSSASDSPTEQLQSNV) form a disordered region. The span at 701-723 (LEASLPSQSSASDSPTEQLQSNV) shows a compositional bias: low complexity.

This sequence belongs to the organo anion transporter (TC 2.A.60) family.

It localises to the cell membrane. It catalyses the reaction 3,3',5-triiodo-L-thyronine(out) + L-glutamate(in) = 3,3',5-triiodo-L-thyronine(in) + L-glutamate(out). It carries out the reaction L-thyroxine(out) + L-glutamate(in) = L-thyroxine(in) + L-glutamate(out). The catalysed reaction is estrone 3-sulfate(out) + L-glutamate(in) = estrone 3-sulfate(in) + L-glutamate(out). The enzyme catalyses taurocholate(out) + L-glutamate(in) = taurocholate(in) + L-glutamate(out). It catalyses the reaction 3,3',5-triiodo-L-thyronine(out) = 3,3',5-triiodo-L-thyronine(in). It carries out the reaction L-thyroxine(out) = L-thyroxine(in). The catalysed reaction is 3,3',5'-triiodo-L-thyronine(out) = 3,3',5'-triiodo-L-thyronine(in). The enzyme catalyses estrone 3-sulfate(out) = estrone 3-sulfate(in). It catalyses the reaction 17beta-estradiol 17-O-(beta-D-glucuronate)(out) = 17beta-estradiol 17-O-(beta-D-glucuronate)(in). It carries out the reaction taurocholate(out) = taurocholate(in). The catalysed reaction is prostaglandin E2(out) = prostaglandin E2(in). Functionally, organic anion antiporter with apparent broad substrate specificity. Recognizes various substrates including thyroid hormones 3,3',5-triiodo-L-thyronine (T3), L-thyroxine (T4) and 3,3',5'-triiodo-L-thyronine (rT3), conjugated steroids such as estrone 3-sulfate and estradiol 17-beta glucuronide, bile acids such as taurocholate and prostanoids such as prostaglandin E2, likely operating in a tissue-specific manner. May be involved in uptake of metabolites from the circulation into organs such as kidney, liver or placenta. Possibly drives the selective transport of thyroid hormones and estrogens coupled to an outward glutamate gradient across the microvillous membrane of the placenta. The transport mechanism, its electrogenicity and potential tissue-specific counterions remain to be elucidated. The polypeptide is Solute carrier organic anion transporter family member 4A1 (Slco4a1) (Mus musculus (Mouse)).